The following is a 122-amino-acid chain: Large ribosomal subunit protein uL18 (122 aa).

The disordered stretch occupies residues 1 to 27; the sequence is MATLSKKQQTQKRHKRLRRHLNGTNHR. Over residues 9-27 the composition is skewed to basic residues; that stretch reads QTQKRHKRLRRHLNGTNHR.

This sequence belongs to the universal ribosomal protein uL18 family. In terms of assembly, part of the 50S ribosomal subunit; part of the 5S rRNA/L5/L18/L25 subcomplex. Contacts the 5S and 23S rRNAs.

In terms of biological role, this is one of the proteins that bind and probably mediate the attachment of the 5S RNA into the large ribosomal subunit, where it forms part of the central protuberance. This Prochlorococcus marinus (strain MIT 9211) protein is Large ribosomal subunit protein uL18.